We begin with the raw amino-acid sequence, 1068 residues long: DNA-directed RNA polymerase subunit beta (1068 aa).

It belongs to the RNA polymerase beta chain family. In plastids the minimal PEP RNA polymerase catalytic core is composed of four subunits: alpha, beta, beta', and beta''. When a (nuclear-encoded) sigma factor is associated with the core the holoenzyme is formed, which can initiate transcription.

It localises to the plastid. The protein resides in the chloroplast. It catalyses the reaction RNA(n) + a ribonucleoside 5'-triphosphate = RNA(n+1) + diphosphate. In terms of biological role, DNA-dependent RNA polymerase catalyzes the transcription of DNA into RNA using the four ribonucleoside triphosphates as substrates. In Staurastrum punctulatum (Green alga), this protein is DNA-directed RNA polymerase subunit beta.